The sequence spans 557 residues: Aspartate--tRNA ligase (557 aa).

Position 168 (Glu-168) interacts with L-aspartate. An aspartate region spans residues 192–195 (QIYK). An L-aspartate-binding site is contributed by Arg-214. ATP-binding positions include 214–216 (RDE) and Gln-223. His-423 provides a ligand contact to L-aspartate. Glu-457 serves as a coordination point for ATP. Position 464 (Arg-464) interacts with L-aspartate. 505 to 508 (GLDR) contacts ATP.

It belongs to the class-II aminoacyl-tRNA synthetase family. Type 1 subfamily. As to quaternary structure, homodimer.

The protein localises to the cytoplasm. It carries out the reaction tRNA(Asp) + L-aspartate + ATP = L-aspartyl-tRNA(Asp) + AMP + diphosphate. In terms of biological role, catalyzes the attachment of L-aspartate to tRNA(Asp) in a two-step reaction: L-aspartate is first activated by ATP to form Asp-AMP and then transferred to the acceptor end of tRNA(Asp). This Mycoplasma pneumoniae (strain ATCC 29342 / M129 / Subtype 1) (Mycoplasmoides pneumoniae) protein is Aspartate--tRNA ligase.